Here is a 404-residue protein sequence, read N- to C-terminus: Argininosuccinate synthase (404 aa).

Residues 10-18 (AYSGGLDTS) and A37 contribute to the ATP site. Y88 and S93 together coordinate L-citrulline. ATP is bound at residue G118. L-aspartate contacts are provided by T120, N124, and D125. Residue N124 coordinates L-citrulline. L-citrulline is bound by residues R128, S178, S187, E263, and Y275.

This sequence belongs to the argininosuccinate synthase family. Type 1 subfamily. As to quaternary structure, homotetramer.

The protein localises to the cytoplasm. The catalysed reaction is L-citrulline + L-aspartate + ATP = 2-(N(omega)-L-arginino)succinate + AMP + diphosphate + H(+). It functions in the pathway amino-acid biosynthesis; L-arginine biosynthesis; L-arginine from L-ornithine and carbamoyl phosphate: step 2/3. In Hahella chejuensis (strain KCTC 2396), this protein is Argininosuccinate synthase.